The following is a 1750-amino-acid chain: Brefeldin A-inhibited guanine nucleotide-exchange protein 3 (1750 aa).

Position 2 is an N-acetylalanine (Ala-2). Disordered regions lie at residues 44–65 and 565–596; these read LRSP…IPGP and EEGS…SSGN. Residues 47 to 61 are compositionally biased toward polar residues; that stretch reads PENSSPVADSESGSS. Over residues 565–588 the composition is skewed to basic and acidic residues; it reads EEGSHPVENGKGDGGHGGFERSDS. Ser-586 carries the post-translational modification Phosphoserine. Residues 601–788 enclose the SEC7 domain; the sequence is AIEQRRAYKL…RALYERISRN (188 aa). Residue Glu-703 is part of the active site. Residue Ser-1307 is modified to Phosphoserine.

In terms of assembly, homodimer.

The protein resides in the cytoplasm. Its subcellular location is the cytosol. It is found in the membrane. Inhibited by brefeldin A. Functionally, activates the ARF proteins by exchanging bound GDP for free GTP. Plays a role in vesicular protein sorting. Involved both in the nuclear division phase and in the nuclear fusion phase. The protein is Brefeldin A-inhibited guanine nucleotide-exchange protein 3 (BIG3) of Arabidopsis thaliana (Mouse-ear cress).